A 693-amino-acid chain; its full sequence is Putative tyrosinase-like protein tyr-3 (693 aa).

A signal peptide spans 1–18; the sequence is MIRYIILLVYFLIFEVNS. Residues H142, H152, H161, H281, H285, and H308 each contribute to the Cu cation site. ShKT domains are found at residues 472 to 506, 516 to 550, 591 to 625, and 634 to 667; these read CFNE…CRQC, CSDR…CQKC, CYNE…CGVC, and CADY…CNTC. Cystine bridges form between C472–C506, C479–C499, C488–C503, C516–C550, C523–C543, C532–C547, C591–C625, C598–C618, C607–C622, C634–C667, C641–C660, and C650–C664.

The protein belongs to the tyrosinase family. Requires Cu(2+) as cofactor.

The polypeptide is Putative tyrosinase-like protein tyr-3 (tyr-3) (Caenorhabditis elegans).